The sequence spans 442 residues: Probable glycine dehydrogenase (decarboxylating) subunit 1 (442 aa).

This sequence belongs to the GcvP family. N-terminal subunit subfamily. The glycine cleavage system is composed of four proteins: P, T, L and H. In this organism, the P 'protein' is a heterodimer of two subunits.

The enzyme catalyses N(6)-[(R)-lipoyl]-L-lysyl-[glycine-cleavage complex H protein] + glycine + H(+) = N(6)-[(R)-S(8)-aminomethyldihydrolipoyl]-L-lysyl-[glycine-cleavage complex H protein] + CO2. Its function is as follows. The glycine cleavage system catalyzes the degradation of glycine. The P protein binds the alpha-amino group of glycine through its pyridoxal phosphate cofactor; CO(2) is released and the remaining methylamine moiety is then transferred to the lipoamide cofactor of the H protein. In Geotalea uraniireducens (strain Rf4) (Geobacter uraniireducens), this protein is Probable glycine dehydrogenase (decarboxylating) subunit 1.